The following is a 51-amino-acid chain: ATP synthase subunit epsilon-like protein, mitochondrial (51 aa).

Lys21 carries the N6-acetyllysine modification.

The protein belongs to the eukaryotic ATPase epsilon family. As to quaternary structure, F-type ATPases have 2 components, CF(1) - the catalytic core - and CF(0) - the membrane proton channel. CF(1) has five subunits: alpha(3), beta(3), gamma(1), delta(1), epsilon(1). CF(0) seems to have nine subunits: a, b, c, d, e, f, g, F6 and 8 (or A6L).

It localises to the mitochondrion inner membrane. In terms of biological role, mitochondrial membrane ATP synthase (F(1)F(0) ATP synthase or Complex V) produces ATP from ADP in the presence of a proton gradient across the membrane which is generated by electron transport complexes of the respiratory chain. F-type ATPases consist of two structural domains, F(1) - containing the extramembraneous catalytic core, and F(0) - containing the membrane proton channel, linked together by a central stalk and a peripheral stalk. During catalysis, ATP synthesis in the catalytic domain of F(1) is coupled via a rotary mechanism of the central stalk subunits to proton translocation. Part of the complex F(1) domain and of the central stalk which is part of the complex rotary element. Rotation of the central stalk against the surrounding alpha(3)beta(3) subunits leads to hydrolysis of ATP in three separate catalytic sites on the beta subunits. This Homo sapiens (Human) protein is ATP synthase subunit epsilon-like protein, mitochondrial.